The sequence spans 351 residues: Nicotinate-nucleotide--dimethylbenzimidazole phosphoribosyltransferase (351 aa).

The Proton acceptor role is filled by glutamate 317.

Belongs to the CobT family.

The catalysed reaction is 5,6-dimethylbenzimidazole + nicotinate beta-D-ribonucleotide = alpha-ribazole 5'-phosphate + nicotinate + H(+). It functions in the pathway nucleoside biosynthesis; alpha-ribazole biosynthesis; alpha-ribazole from 5,6-dimethylbenzimidazole: step 1/2. In terms of biological role, catalyzes the synthesis of alpha-ribazole-5'-phosphate from nicotinate mononucleotide (NAMN) and 5,6-dimethylbenzimidazole (DMB). This is Nicotinate-nucleotide--dimethylbenzimidazole phosphoribosyltransferase from Pseudomonas putida (strain GB-1).